The chain runs to 392 residues: Stilbene synthase 1 (392 aa).

55–58 (KFNR) contacts substrate. The active site involves Cys-164. Residues Leu-267 and 305-307 (GGP) contribute to the substrate site.

This sequence belongs to the thiolase-like superfamily. Chalcone/stilbene synthases family. Homodimer. In terms of tissue distribution, in leaves, expressed in palisade and spongy parenchyma cells and, to a lesser extent, in epidermal cells after induction.

Its subcellular location is the cytoplasm. The enzyme catalyses 4-coumaroyl-CoA + 3 malonyl-CoA + 3 H(+) = trans-resveratrol + 4 CO2 + 4 CoA. It participates in phytoalexin biosynthesis; 3,4',5-trihydroxystilbene biosynthesis; 3,4',5-trihydroxystilbene from trans-4-coumarate: step 2/2. Mediates resistance to pathogens which are sensitive to stilbenes such as Botrytis cinerea, Eutypa lata and Plasmopora viticola by enhancing the production of phytoalexins. Confers resistance to Phytophthora palmivora when expressed in papaya. In Vitis vinifera (Grape), this protein is Stilbene synthase 1 (VINST1).